An 860-amino-acid chain; its full sequence is Leucine--tRNA ligase (860 aa).

Positions 42–52 (PYPSGRLHMGH) match the 'HIGH' region motif. The short motif at 619-623 (KMSKS) is the 'KMSKS' region element. Residue K622 participates in ATP binding.

Belongs to the class-I aminoacyl-tRNA synthetase family.

It is found in the cytoplasm. It carries out the reaction tRNA(Leu) + L-leucine + ATP = L-leucyl-tRNA(Leu) + AMP + diphosphate. This chain is Leucine--tRNA ligase, found in Escherichia coli O81 (strain ED1a).